Reading from the N-terminus, the 266-residue chain is Imidazole glycerol phosphate synthase subunit HisF (266 aa).

Active-site residues include Asp-11 and Asp-130.

It belongs to the HisA/HisF family. Heterodimer of HisH and HisF.

Its subcellular location is the cytoplasm. It carries out the reaction 5-[(5-phospho-1-deoxy-D-ribulos-1-ylimino)methylamino]-1-(5-phospho-beta-D-ribosyl)imidazole-4-carboxamide + L-glutamine = D-erythro-1-(imidazol-4-yl)glycerol 3-phosphate + 5-amino-1-(5-phospho-beta-D-ribosyl)imidazole-4-carboxamide + L-glutamate + H(+). It participates in amino-acid biosynthesis; L-histidine biosynthesis; L-histidine from 5-phospho-alpha-D-ribose 1-diphosphate: step 5/9. In terms of biological role, IGPS catalyzes the conversion of PRFAR and glutamine to IGP, AICAR and glutamate. The HisF subunit catalyzes the cyclization activity that produces IGP and AICAR from PRFAR using the ammonia provided by the HisH subunit. This Delftia acidovorans (strain DSM 14801 / SPH-1) protein is Imidazole glycerol phosphate synthase subunit HisF.